A 146-amino-acid chain; its full sequence is Holo-[acyl-carrier-protein] synthase (146 aa).

Mg(2+) is bound by residues Asp-9 and Glu-63.

Belongs to the P-Pant transferase superfamily. AcpS family. The cofactor is Mg(2+).

The protein resides in the cytoplasm. The catalysed reaction is apo-[ACP] + CoA = holo-[ACP] + adenosine 3',5'-bisphosphate + H(+). Its function is as follows. Transfers the 4'-phosphopantetheine moiety from coenzyme A to a Ser of acyl-carrier-protein. The sequence is that of Holo-[acyl-carrier-protein] synthase from Burkholderia ambifaria (strain ATCC BAA-244 / DSM 16087 / CCUG 44356 / LMG 19182 / AMMD) (Burkholderia cepacia (strain AMMD)).